The chain runs to 278 residues: Nucleotide-binding protein Tlet_0523 (278 aa).

9 to 16 (GLSGAGKS) lines the ATP pocket. Residue 58–61 (DIRS) participates in GTP binding.

It belongs to the RapZ-like family.

Displays ATPase and GTPase activities. The chain is Nucleotide-binding protein Tlet_0523 from Pseudothermotoga lettingae (strain ATCC BAA-301 / DSM 14385 / NBRC 107922 / TMO) (Thermotoga lettingae).